A 287-amino-acid polypeptide reads, in one-letter code: Hydroxysteroid 11-beta-dehydrogenase 1-like protein (287 aa).

A signal peptide spans 1–22 (MKLYAKLLLCSICVAFIAVRWS). Residues 40–66 (GASTGIGEQLAYHYARLGAQIVITARR), 91–92 (DM), and 118–120 (NHI) each bind NADP(+). Ser169 is a binding site for substrate. Tyr182 functions as the Proton acceptor in the catalytic mechanism. NADP(+) is bound by residues 182–186 (YASTK) and 215–221 (GLIDTDS).

This sequence belongs to the short-chain dehydrogenases/reductases (SDR) family.

It is found in the secreted. It catalyses the reaction cortisone + NADPH + H(+) = cortisol + NADP(+). Its function is as follows. Unidirectional NADP(+)-dependent cortisol dehydrogenase (in vitro). This Danio rerio (Zebrafish) protein is Hydroxysteroid 11-beta-dehydrogenase 1-like protein (hsd11b1l).